We begin with the raw amino-acid sequence, 329 residues long: MIVVTGAAGFIGSNLVRGLNRRGIQDIIAVDDLTDGDKFRNLVDCSIADYLDKDEFRERVRGGNLPALRAVLHQGACSDTTERNGRYMLDNNYRVTLELFEYCQAERVPFLYASSAAVYGGSSVYVEDPANEHPLNVYGYSKLLFDQVLRTRMDSLTAQVVGLRYFNVYGPHEQHKGRMASVAFHNMNQFLAEGHVRLFAGWDGYEDGGQSRDFISVEDVVAVNLHFLDNPGQSGVFNCGTGRAQPFNDVAAAVVNTLRAERGEAALPLAELVKKGLLRYIPFPDDLKGRYQSYTQADVGRLRAAGFSAPMRDVQTGVSEYVRYWRALK.

Residues 10-11 (FI), 31-32 (DD), lysine 38, lysine 53, 74-78 (QGACS), and asparagine 91 each bind NADP(+). Tyrosine 138 serves as the catalytic Proton acceptor. Lysine 142 is a binding site for NADP(+). Asparagine 167 serves as a coordination point for substrate. NADP(+) contacts are provided by valine 168 and lysine 176. Lysine 176 functions as the Proton acceptor in the catalytic mechanism. Residues arginine 178, histidine 185, 199 to 202 (FAGW), arginine 212, and tyrosine 291 each bind substrate.

This sequence belongs to the NAD(P)-dependent epimerase/dehydratase family. HldD subfamily. As to quaternary structure, homopentamer. NADP(+) is required as a cofactor.

It carries out the reaction ADP-D-glycero-beta-D-manno-heptose = ADP-L-glycero-beta-D-manno-heptose. It functions in the pathway nucleotide-sugar biosynthesis; ADP-L-glycero-beta-D-manno-heptose biosynthesis; ADP-L-glycero-beta-D-manno-heptose from D-glycero-beta-D-manno-heptose 7-phosphate: step 4/4. Its pathway is bacterial outer membrane biogenesis; LPS core biosynthesis. Its function is as follows. Catalyzes the interconversion between ADP-D-glycero-beta-D-manno-heptose and ADP-L-glycero-beta-D-manno-heptose via an epimerization at carbon 6 of the heptose. This is ADP-L-glycero-D-manno-heptose-6-epimerase from Bordetella parapertussis (strain 12822 / ATCC BAA-587 / NCTC 13253).